Consider the following 115-residue polypeptide: Macrophage migration inhibitory factor (115 aa).

P2 (proton acceptor; via imino nitrogen) is an active-site residue. Substrate is bound by residues K33 and I65. Residue K78 is modified to N6-acetyllysine; alternate. K78 is subject to N6-succinyllysine; alternate. N98 serves as a coordination point for substrate.

The protein belongs to the MIF family. As to quaternary structure, homotrimer. Interacts with CXCR2 extracellular domain. Interacts with the CD74 extracellular domain, USO1, COPS5 and BNIPL.

It localises to the secreted. Its subcellular location is the cytoplasm. The enzyme catalyses 3-phenylpyruvate = enol-phenylpyruvate. It carries out the reaction L-dopachrome = 5,6-dihydroxyindole-2-carboxylate. Its function is as follows. Pro-inflammatory cytokine involved in the innate immune response to bacterial pathogens. The expression of MIF at sites of inflammation suggests a role as mediator in regulating the function of macrophages in host defense. Counteracts the anti-inflammatory activity of glucocorticoids. Has phenylpyruvate tautomerase and dopachrome tautomerase activity (in vitro), but the physiological substrate is not known. It is not clear whether the tautomerase activity has any physiological relevance, and whether it is important for cytokine activity. The sequence is that of Macrophage migration inhibitory factor from Homo sapiens (Human).